A 491-amino-acid polypeptide reads, in one-letter code: MALQFQLNQTTPQTVTTDCVIVGIYADKTLSPTAKTLDAASGGRITALTARGDLTGKSGTSALLHDLNGVTAPRVLVVGLGEADKFGPGQYIKAVGDAVRALKDAPVTHALLTLSELPVKDRNAAWNIHQAVIAADHAAYRYTATLGTSRKKAAESGLITLAIHGQESSGLTLGQAIAEGVEYARALGNLPPNICTPVYLAETTAHFAATHPGATCEILDESKMEALGMGALLAVARGSANRPRLIVLKWNGGGDARPYVLVGKGITFDTGGVNLKTQGGIEEMKYDMCGGAAVIGTFVAAVKVRLPLNLIVIVPAVENAIDGNAYRPSDVITSMSGKTIEVGNTDAEGRLILCDALTYAERFKPEALIDVATLTGACMIALGRAATGLMTHHDDLANELLTAGEHVHDRAWRLPLWDEYQNLLDSTFADVYNIGGRWGGAITAGCFLSRFTEGQRWAHLDIAGSASNEGKRGMATGRPVGLLTQWLVDRC.

Lys-264 and Asp-269 together coordinate Mn(2+). Lys-276 is a catalytic residue. Mn(2+) is bound by residues Asp-287, Asp-346, and Glu-348. Residue Arg-350 is part of the active site.

This sequence belongs to the peptidase M17 family. It depends on Mn(2+) as a cofactor.

The protein localises to the cytoplasm. The enzyme catalyses Release of an N-terminal amino acid, Xaa-|-Yaa-, in which Xaa is preferably Leu, but may be other amino acids including Pro although not Arg or Lys, and Yaa may be Pro. Amino acid amides and methyl esters are also readily hydrolyzed, but rates on arylamides are exceedingly low.. It catalyses the reaction Release of an N-terminal amino acid, preferentially leucine, but not glutamic or aspartic acids.. Presumably involved in the processing and regular turnover of intracellular proteins. Catalyzes the removal of unsubstituted N-terminal amino acids from various peptides. The protein is Probable cytosol aminopeptidase of Xylella fastidiosa (strain 9a5c).